A 310-amino-acid chain; its full sequence is Homeobox protein knotted-1-like 2 (310 aa).

Residues 178–208 are disordered; that stretch reads SDDGAVSSDEELREDDDIAADDSQQRSNDRD. The segment covering 185-197 has biased composition (acidic residues); it reads SDEELREDDDIAA. Positions 208-228 constitute an ELK domain; it reads DLKDQLLRKFGSHISSLKLEF. The homeobox; TALE-type DNA-binding region spans 229 to 292; it reads SKKKKKGKLP…NQRKRHWKPS (64 aa).

The protein belongs to the TALE/KNOX homeobox family. May form heterodimeric complex with the TALE/BELL protein BEL1, BLH1 and BLH2. Interacts with OFP12 and OFP14. Interacts with BZIP30. Expressed predominantly in shoot apices of seedlings, in the receptacle and developing pistil of flowers and in axillary buds of inflorescence stems.

Its subcellular location is the nucleus. Functionally, may play a role in meristem function, and may be involved in maintaining cells in an undifferentiated, meristematic state. Probably binds to the DNA sequence 5'-TGAC-3'. In Arabidopsis thaliana (Mouse-ear cress), this protein is Homeobox protein knotted-1-like 2 (KNAT2).